The chain runs to 67 residues: Conotoxin Cl6.7 (67 aa).

The first 24 residues, 1-24 (MKVTAVLMVAVLVLTACQLTTANT), serve as a signal peptide directing secretion. Positions 25 to 39 (TDYVRRIPARKSTMS) are excised as a propeptide. 3 disulfide bridges follow: Cys43/Cys58, Cys50/Cys62, and Cys57/Cys66.

The protein belongs to the conotoxin O1 superfamily. As to expression, expressed by the venom duct.

Its subcellular location is the secreted. The protein is Conotoxin Cl6.7 of Californiconus californicus (California cone).